The sequence spans 326 residues: ATP synthase subunit b 2 (326 aa).

Residues 2 to 22 (LIDWFTVVAQALNFLILVWLL) traverse the membrane as a helical segment. 2 stretches are compositionally biased toward basic and acidic residues: residues 275-298 (QQGRKEGRAVQNWDKAESEIRKEN) and 306-326 (PPPEAKAKPKPEEPKPEIGSP). The tract at residues 275 to 326 (QQGRKEGRAVQNWDKAESEIRKENLSPAKTEPPPEAKAKPKPEEPKPEIGSP) is disordered.

It belongs to the ATPase B chain family. As to quaternary structure, F-type ATPases have 2 components, F(1) - the catalytic core - and F(0) - the membrane proton channel. F(1) has five subunits: alpha(3), beta(3), gamma(1), delta(1), epsilon(1). F(0) has three main subunits: a(1), b(2) and c(10-14). The alpha and beta chains form an alternating ring which encloses part of the gamma chain. F(1) is attached to F(0) by a central stalk formed by the gamma and epsilon chains, while a peripheral stalk is formed by the delta and b chains.

Its subcellular location is the cell inner membrane. In terms of biological role, f(1)F(0) ATP synthase produces ATP from ADP in the presence of a proton or sodium gradient. F-type ATPases consist of two structural domains, F(1) containing the extramembraneous catalytic core and F(0) containing the membrane proton channel, linked together by a central stalk and a peripheral stalk. During catalysis, ATP synthesis in the catalytic domain of F(1) is coupled via a rotary mechanism of the central stalk subunits to proton translocation. Functionally, component of the F(0) channel, it forms part of the peripheral stalk, linking F(1) to F(0). The chain is ATP synthase subunit b 2 from Albidiferax ferrireducens (strain ATCC BAA-621 / DSM 15236 / T118) (Rhodoferax ferrireducens).